The primary structure comprises 249 residues: Phosphoadenosine 5'-phosphosulfate reductase (249 aa).

Residue Cys230 is the Nucleophile; cysteine thiosulfonate intermediate of the active site.

The protein belongs to the PAPS reductase family. CysH subfamily.

It is found in the cytoplasm. It carries out the reaction [thioredoxin]-disulfide + sulfite + adenosine 3',5'-bisphosphate + 2 H(+) = [thioredoxin]-dithiol + 3'-phosphoadenylyl sulfate. It participates in sulfur metabolism; hydrogen sulfide biosynthesis; sulfite from sulfate: step 3/3. In terms of biological role, catalyzes the formation of sulfite from phosphoadenosine 5'-phosphosulfate (PAPS) using thioredoxin as an electron donor. In Synechocystis sp. (strain ATCC 27184 / PCC 6803 / Kazusa), this protein is Phosphoadenosine 5'-phosphosulfate reductase.